We begin with the raw amino-acid sequence, 405 residues long: DNA polymerase IV 1 (405 aa).

The UmuC domain maps to 23 to 203 (IAHIDCDAFY…RPVTTIWGVG (181 aa)). Residues Asp27 and Asp120 each contribute to the Mg(2+) site. Glu121 is an active-site residue.

This sequence belongs to the DNA polymerase type-Y family. As to quaternary structure, monomer. Requires Mg(2+) as cofactor.

Its subcellular location is the cytoplasm. It catalyses the reaction DNA(n) + a 2'-deoxyribonucleoside 5'-triphosphate = DNA(n+1) + diphosphate. Functionally, poorly processive, error-prone DNA polymerase involved in untargeted mutagenesis. Copies undamaged DNA at stalled replication forks, which arise in vivo from mismatched or misaligned primer ends. These misaligned primers can be extended by PolIV. Exhibits no 3'-5' exonuclease (proofreading) activity. May be involved in translesional synthesis, in conjunction with the beta clamp from PolIII. The polypeptide is DNA polymerase IV 1 (dinB1) (Agrobacterium fabrum (strain C58 / ATCC 33970) (Agrobacterium tumefaciens (strain C58))).